The primary structure comprises 545 residues: Tripartite motif-containing 55 (545 aa).

The segment at 26–82 (CPICLEMFTKPVVILPCQHNLCRKCASDIFQASNPYLPTRGGTTVASGGRFRCPSCR) adopts an RING-type zinc-finger fold. A B box-type zinc finger spans residues 119-161 (LDQPMCEEHEEERINIYCLNCEVPTCSLCKVFGAHKDCQVAPL). Zn(2+) is bound by residues Cys124, His127, Cys147, and His153. The COS domain occupies 269–327 (MDEPEMAVFLQNAKTLLQKIVEASKAFQMEKLEQGYEIMSNFTVNLNREEKIIREIDFS). Disordered regions lie at residues 324–352 (IDFS…VEVE), 359–378 (IASS…SQLP), and 417–532 (SQQT…EPAR). Residues 328 to 352 (REEEEEEDAGEIDEEGEGEDAVEVE) are compositionally biased toward acidic residues. Positions 417–428 (SQQTTQSETSGP) are enriched in polar residues. The segment covering 474-485 (SSVQSAEVAEAA) has biased composition (low complexity). Residues 486–506 (TNEQAAVSGKESSSTAATSQI) show a composition bias toward polar residues.

Post-translationally, targeted for degradation through the proteasomal and lysosomal pathways in the presence of SUMO3. In terms of tissue distribution, widely expressed in various tissues, besides skeletal muscle and heart, such as brain, lung, liver, spleen and kidney.

The protein localises to the nucleus. It is found in the cytoplasm. The enzyme catalyses S-ubiquitinyl-[E2 ubiquitin-conjugating enzyme]-L-cysteine + [acceptor protein]-L-lysine = [E2 ubiquitin-conjugating enzyme]-L-cysteine + N(6)-ubiquitinyl-[acceptor protein]-L-lysine.. In terms of biological role, E3 ubiquitin ligase that plays an important role in regulating cardiac development and contractility, muscle growth, metabolism, and fiber-type differentiation. Acts as a critical factor that regulates cardiomyocyte size during development in concert with TRIM63 by regulating E2F1-mediated gene expression. Plays a role in apoptosis induction in cardiomyocytes by promoting ubiquitination of the DUSP1 phosphatase. Promotes non-canonical NF-kappa-B signaling and B-cell-mediated immune responses by mediating NFKB2 'Lys-48'-linked ubiquitination and processing. In turn, NFKB2 is further processed by valosin-containing protein/VCP, an ATPase that mediates ubiquitin-dependent protein degradation by the proteasome. May play a role in preventing macrophages from producing inflammatory factors and migrating by downregulating the level of nuclear NF-kappa-B subunit RELA. Modifies also PPARG via polyubiquitination and accelerates PPARG proteasomal degradation to inhibit its activity. This Mus musculus (Mouse) protein is Tripartite motif-containing 55 (Trim55).